The primary structure comprises 666 residues: MRAVRAETRARELFRDAAFPASDSSLFYNLSTPLAQFREDITWRRPQDICATPQLFPDNPWEGQVKQGLLGDCWFLCACAALQKSRHLLDQVFPPGQPGWSDQEYQGFFTCRIWQFGHWEEVTIDDRLPCLAGRLCFSRCQREDVFWLPLLEKAYAKVHGSYEHLWAGQVADALVDLTGSLAERWSLKDIRKASGQQDRPSGGEHRACQQLLRLKDQCLLSCSVLSPRAGARELGEFHAFIISDLQELRSQTGQGILLLRIHNPWGRRCWQGLWREGGEGWNQVEPAKESELLAQLQEGEFWVEEEEFLREFDEVTIGYPVTEAGHLQSLYTEKVLCHTRALPGAWVTGQSAGGCRNNSCFPCNPKFWLRLLEPSEVCVAVLQRPRRRLVGQTRALAGASPAPVNLPGKDYQAVGLHIWKVEKRKISLPRVLSAPPVAGTACHAYDREIHLRCELSPGYYLAVPSTFLKDVPGQFLLRVFSTGKISLSAVRLATKGASPGAALPAGEWETVQLQGSWRAGQTAGGSRNFASYPCNPCLPFSVPEGAGPRYIRITLQQHCRLSDSQLHPIGFHVFQVPADGEKQDACSLLLQEPLLSCVPHCYAQEVSRLCLLSAGNYRIVPSTYLPDTEGTFTVTIATRIDRQSIHSQEMLGQLLQEVSFMAVMKA.

The region spanning 13–321 (LFRDAAFPAS…FDEVTIGYPV (309 aa)) is the Calpain catalytic domain. Catalysis depends on residues cysteine 73, histidine 238, and asparagine 263. Domain III stretches follow at residues 322-488 (TEAG…ISLS) and 507-648 (EWET…IHSQ).

Belongs to the peptidase C2 family. As to expression, ubiquitous.

Its subcellular location is the cytoplasm. It is found in the nucleus. Its function is as follows. Calcium-regulated non-lysosomal thiol-protease which catalyzes limited proteolysis of substrates involved in cytoskeletal remodeling and signal transduction. May play a role in insulin-stimulated glucose uptake. This Rattus norvegicus (Rat) protein is Calpain-10 (Capn10).